The following is a 185-amino-acid chain: GTP cyclohydrolase 1 (185 aa).

Positions 75, 78, and 146 each coordinate Zn(2+).

The protein belongs to the GTP cyclohydrolase I family. As to quaternary structure, toroid-shaped homodecamer, composed of two pentamers of five dimers.

It catalyses the reaction GTP + H2O = 7,8-dihydroneopterin 3'-triphosphate + formate + H(+). Its pathway is cofactor biosynthesis; 7,8-dihydroneopterin triphosphate biosynthesis; 7,8-dihydroneopterin triphosphate from GTP: step 1/1. This is GTP cyclohydrolase 1 from Methylococcus capsulatus (strain ATCC 33009 / NCIMB 11132 / Bath).